The sequence spans 347 residues: Trace amine-associated receptor 4 (347 aa).

Topologically, residues 1 to 37 (MNSPDLWYSPETQFCFAAANNSCPRKARPALVVCAMY) are extracellular. N-linked (GlcNAc...) asparagine glycosylation is present at asparagine 20. Disulfide bonds link cysteine 23–cysteine 187 and cysteine 106–cysteine 191. The helical transmembrane segment at 38 to 58 (LVMIGAIVMTMLGNMVVIISI) threads the bilayer. The Cytoplasmic segment spans residues 59-69 (AHFKQLHSPTN). A helical membrane pass occupies residues 70 to 90 (FLILSMATTDFLLSCVVMPFS). At 91-110 (MVRSIESCWYFGDLFCKVHS) the chain is on the extracellular side. The helical transmembrane segment at 111–129 (CCDIMLCTTSIFHLCFISV) threads the bilayer. Residues 130 to 149 (DRHYAVCDPLHYVTQITVGV) are Cytoplasmic-facing. Residues 150–170 (VGVFLLISWSVPILFAFGLVF) traverse the membrane as a helical segment. Over 171–197 (SELNLIGAEDFVAAIDCTGLCVLIFNK) the chain is Extracellular. The extracellular Loop 2 (ECL2) stretch occupies residues 175-188 (LIGAEDFVAAIDCT). A helical transmembrane segment spans residues 198 to 218 (LWGVLASFIAFFLPGAIMVGI). Topologically, residues 219 to 260 (YIHIFTVARKHARKIGPGPRTKRALSESKMKATSGKESKATK) are cytoplasmic. The chain crosses the membrane as a helical span at residues 261–281 (TLSIVMGVFVLCWLPFFVLTI). Residues 282-296 (TDPFIGFTTPEDLYN) lie on the Extracellular side of the membrane. The helical transmembrane segment at 297–317 (VFLWLGYFNSTFNPIIYGMFY) threads the bilayer. Over 318-347 (PWFRKALRMIVTGTIFRSDSSTSSLHPAHP) the chain is Cytoplasmic.

It belongs to the G-protein coupled receptor 1 family.

The protein resides in the cell membrane. In terms of biological role, olfactory receptor specific for 2-phenylethylamine, a trace amine present at high concentration in the urine of carnivore species, playing a key role in fear and avoidance responses. 2-phenylethylamine acts as a kairomone in the chemical detection of carnivore odor and triggers fear in rats. This receptor is probably mediated by the G(s)-class of G-proteins which activate adenylate cyclase. The polypeptide is Trace amine-associated receptor 4 (Rattus norvegicus (Rat)).